The chain runs to 280 residues: Transcription factor MYB60 (280 aa).

HTH myb-type domains are found at residues 9 to 65 (KIGI…RPGI) and 66 to 116 (KRGN…KKKL). 2 DNA-binding regions (H-T-H motif) span residues 37-61 (WRSV…TNYL) and 89-112 (WASI…NTHL). 2 positions are modified to S-nitrosocysteine: C49 and C53. Residues 118 to 127 (KSDSDERSRS) show a composition bias toward basic and acidic residues. Disordered regions lie at residues 118 to 149 (KSDS…TYAS) and 204 to 247 (EEGH…NATP). Residues 128 to 149 (ENIALQTSSTRNTINHRSTYAS) show a composition bias toward polar residues.

Specifically expressed in guard cells. Present in seedlings, leaves, stems and flowers.

It localises to the nucleus. Transcription factor involved in the regulation of gene (e.g. drought-regulated and flavonoid biosynthetic genes) expression and stomatal movements leading to negative regulation of responses to drought and responses to other physiological stimuli (e.g. light). Promotes guard cell deflation in response to water deficit. Triggers root growth upon osmotic stress (e.g. mannitol containing medium). The chain is Transcription factor MYB60 from Arabidopsis thaliana (Mouse-ear cress).